Here is an 87-residue protein sequence, read N- to C-terminus: Small ribosomal subunit protein uS17 (87 aa).

This sequence belongs to the universal ribosomal protein uS17 family. In terms of assembly, part of the 30S ribosomal subunit.

One of the primary rRNA binding proteins, it binds specifically to the 5'-end of 16S ribosomal RNA. This chain is Small ribosomal subunit protein uS17, found in Staphylococcus haemolyticus (strain JCSC1435).